We begin with the raw amino-acid sequence, 54 residues long: MLHYSVVFLVIALIAAVFGFGGIAAGAVEIAKILFFLFAIMAIVSFVVSLIKKN.

Transmembrane regions (helical) follow at residues 6–26 (VVFL…IAAG) and 30–50 (IAKI…VVSL).

Belongs to the UPF0391 family.

It is found in the cell membrane. This Polaromonas naphthalenivorans (strain CJ2) protein is UPF0391 membrane protein Pnap_0920.